Reading from the N-terminus, the 446-residue chain is NADH oxidase (446 aa).

FAD contacts are provided by residues 7 to 11 (GCTHA), Glu32, Cys42, Val79, 110 to 113 (TTGS), Lys132, and Tyr157. His10 (proton acceptor) is an active-site residue. Cys42 functions as the Redox-active in the catalytic mechanism. Cys42 is modified (cysteine sulfinic acid (-SO2H)). NAD(+)-binding positions include 150 to 165 (VVVVGGGYIGIELVEA), Asp177, Tyr186, and Gly243. FAD contacts are provided by residues 271–281 (TSNPDIFAAGD), Leu298, Ala299, and Thr300. An NAD(+)-binding site is contributed by Gly328. Phe424 is a binding site for FAD.

The protein belongs to the class-III pyridine nucleotide-disulfide oxidoreductase family. Homodimer. It depends on FAD as a cofactor. Post-translationally, the N-terminus is blocked.

It carries out the reaction 2 NADH + O2 + 2 H(+) = 2 NAD(+) + 2 H2O. In terms of biological role, catalyzes the four-electron reduction of molecular oxygen to water. The protein is NADH oxidase (nox) of Enterococcus faecalis (strain ATCC 700802 / V583).